The chain runs to 666 residues: Hybrid PKS-NRPS synthetase pytA (666 aa).

The region spanning M1 to E340 is the Ketosynthase family 3 (KS3) domain. Catalysis depends on for beta-ketoacyl synthase activity residues C87, H222, and H260. The tract at residues V455–R665 is malonyl-CoA:ACP transacylase (MAT) domain. S548 (for malonyltransferase activity) is an active-site residue.

In the C-terminal section; belongs to the NRP synthetase family.

Its pathway is secondary metabolite biosynthesis. In terms of biological role, hybrid PKS-NRPS synthetase; part of the gene cluster that mediates the biosynthesis of pyranterreones, a family of antioxidative compounds. The first step of pyranonigrins biosynthesis is performed by the hybrid PKS-NRPS synthetase pytA that condenses 4 malonyl-CoA units ato the acetyl starter unit by the modular PKS of pytA. The acyl chain is then connected to an L-serine through the amide bond by the modular NRPS of pytA. A tetramic acid is formed and released from the PKS-NRPS pytA to give pyranterreone 5 with the help of the thioesterase pytI. Pyranterreone 5 could be methylated by pytC to afford pyranterreone 6. Both pyranterreones 5 and 6 are subsequently oxidized by the FAD-linked oxidoreductase pytB and the cytochrome P450 monooxygenase pytD to form the fused gamma-pyrone core, resulting in pyranterreones 7 and 11, respectively. The hydroxy group at C-8 of pyranterreones 7 and 11 are dehydrated by the aspartyl protease pytH to form a delta-7 double bond to give pyranterreones 3 and 1, 2 accordingly. The exo-methylene of pyranterreone 3 could be reduced into a pendant methyl by reductase pytE to provide pyranterreone 4, also known as cordylactam. Pyranterreone 4 can be reconverted to pyranterreone 3 through pytB-catalyzed dehydrogenation or further oxidized to pyranterreones 9 and 10. This is Hybrid PKS-NRPS synthetase pytA from Aspergillus terreus (strain NIH 2624 / FGSC A1156).